A 255-amino-acid chain; its full sequence is Thiazole synthase (255 aa).

Lysine 96 (schiff-base intermediate with DXP) is an active-site residue. 1-deoxy-D-xylulose 5-phosphate is bound by residues glycine 157, 184–185 (AG), and 206–207 (NT).

The protein belongs to the ThiG family. Homotetramer. Forms heterodimers with either ThiH or ThiS.

The protein localises to the cytoplasm. The catalysed reaction is [ThiS sulfur-carrier protein]-C-terminal-Gly-aminoethanethioate + 2-iminoacetate + 1-deoxy-D-xylulose 5-phosphate = [ThiS sulfur-carrier protein]-C-terminal Gly-Gly + 2-[(2R,5Z)-2-carboxy-4-methylthiazol-5(2H)-ylidene]ethyl phosphate + 2 H2O + H(+). Its pathway is cofactor biosynthesis; thiamine diphosphate biosynthesis. Catalyzes the rearrangement of 1-deoxy-D-xylulose 5-phosphate (DXP) to produce the thiazole phosphate moiety of thiamine. Sulfur is provided by the thiocarboxylate moiety of the carrier protein ThiS. In vitro, sulfur can be provided by H(2)S. The protein is Thiazole synthase of Clostridium acetobutylicum (strain ATCC 824 / DSM 792 / JCM 1419 / IAM 19013 / LMG 5710 / NBRC 13948 / NRRL B-527 / VKM B-1787 / 2291 / W).